Reading from the N-terminus, the 96-residue chain is Large ribosomal subunit protein bL27 (96 aa).

Positions 1–10 (MLLKLNIQLF) are excised as a propeptide.

This sequence belongs to the bacterial ribosomal protein bL27 family. The N-terminus is cleaved by ribosomal processing cysteine protease Prp.

This Phytoplasma mali (strain AT) protein is Large ribosomal subunit protein bL27.